Consider the following 229-residue polypeptide: Large ribosomal subunit protein uL1 (229 aa).

Belongs to the universal ribosomal protein uL1 family. In terms of assembly, part of the 50S ribosomal subunit.

Binds directly to 23S rRNA. The L1 stalk is quite mobile in the ribosome, and is involved in E site tRNA release. Functionally, protein L1 is also a translational repressor protein, it controls the translation of the L11 operon by binding to its mRNA. In Pediococcus pentosaceus (strain ATCC 25745 / CCUG 21536 / LMG 10740 / 183-1w), this protein is Large ribosomal subunit protein uL1.